A 387-amino-acid polypeptide reads, in one-letter code: Phosphoglycerate kinase (387 aa).

Substrate-binding positions include 21 to 23, Arg-36, 59 to 62, Arg-113, and Arg-146; these read DLN and HLGR. ATP is bound by residues Lys-197, Glu-314, and 340 to 343; that span reads GGDT.

It belongs to the phosphoglycerate kinase family. In terms of assembly, monomer.

It localises to the cytoplasm. The enzyme catalyses (2R)-3-phosphoglycerate + ATP = (2R)-3-phospho-glyceroyl phosphate + ADP. Its pathway is carbohydrate degradation; glycolysis; pyruvate from D-glyceraldehyde 3-phosphate: step 2/5. The chain is Phosphoglycerate kinase (pgk) from Pasteurella multocida (strain Pm70).